We begin with the raw amino-acid sequence, 555 residues long: Perforin-1 (555 aa).

The first 21 residues, 1 to 21 (MAARLLLLGILLLLLPLPVPA), serve as a signal peptide directing secretion. Disulfide bonds link cysteine 23-cysteine 76, cysteine 31-cysteine 73, and cysteine 102-cysteine 176. One can recognise an MACPF domain in the interval 27–375 (ARSECKRSHK…QYLTDRARWR (349 aa)). The chain crosses the membrane as a beta stranded span at residues 129-149 (WKVGLDVTPKPTSNVHVSVAG). N-linked (GlcNAc...) asparagine glycosylation is present at asparagine 205. 4 disulfide bridges follow: cysteine 242–cysteine 408, cysteine 377–cysteine 393, cysteine 381–cysteine 395, and cysteine 397–cysteine 407. Residues 257–279 (CLTVEAQVNIGIHGSISAEAKAC) traverse the membrane as a beta stranded segment. The EGF-like domain maps to 376 to 408 (DCSRPCPPGRQKSPRDPCQCVCHGSAVTTQDCC). Residues 397 to 519 (CHGSAVTTQD…CNLNHGHLKF (123 aa)) form the C2 domain. Positions 429, 430, 433, 434, 436, 484, 486, 490, 491, and 492 each coordinate Ca(2+). Disulfide bonds link cysteine 497–cysteine 510 and cysteine 525–cysteine 534. Asparagine 549 carries an N-linked (GlcNAc...) asparagine glycan.

It belongs to the complement C6/C7/C8/C9 family. In terms of assembly, monomer, as soluble protein. Homooligomer; homooligomerizes to form a pore-forming ring. The cofactor is Ca(2+). N-glycosylated.

The protein resides in the cytolytic granule. It localises to the secreted. It is found in the cell membrane. The protein localises to the endosome lumen. In terms of biological role, pore-forming protein that plays a key role in granzyme-mediated programmed cell death, and in defense against virus-infected or neoplastic cells. Plays an important role in killing other cells that are recognized as non-self by the immune system, e.g. in transplant rejection or some forms of autoimmune disease. Can insert into the membrane of target cells in its calcium-bound form, oligomerize and form large pores. Promotes cytolysis and apoptosis of target cells by mediating the passage and uptake of cytotoxic granzymes. Facilitates the delivery of cationic cargo protein, while anionic or neural proteins are not delivered efficiently. Perforin pores allow the release of mature caspase-7 (CASP7) into the extracellular milieu. The chain is Perforin-1 (PRF1) from Homo sapiens (Human).